A 193-amino-acid chain; its full sequence is Bcl-2-like protein 2 (193 aa).

At A2 the chain carries N-acetylalanine. The short motif at 9–29 (DTRALVADFVGYKLRQKGYVC) is the BH4 element. A BH1 motif is present at residues 85 to 104 (ELFQGGPNWGRLVAFFVFGA). Residues 136–151 (DWIHSSGGWAEFTALY) carry the BH2 motif.

Belongs to the Bcl-2 family. Interacts with HIF3A isoform 2 (via C-terminus domain). Interacts with BOP. As to expression, expressed in almost all myeloid cell lines and in a wide range of tissues, with highest levels in brain, colon, and salivary gland.

Its subcellular location is the mitochondrion membrane. In terms of biological role, promotes cell survival. Blocks dexamethasone-induced apoptosis. Mediates survival of postmitotic Sertoli cells by suppressing death-promoting activity of BAX. This chain is Bcl-2-like protein 2 (Bcl2l2), found in Mus musculus (Mouse).